A 222-amino-acid chain; its full sequence is Deoxyribose-phosphate aldolase (222 aa).

Asp-93 functions as the Proton donor/acceptor in the catalytic mechanism. Lys-156 acts as the Schiff-base intermediate with acetaldehyde in catalysis. Lys-186 serves as the catalytic Proton donor/acceptor.

It belongs to the DeoC/FbaB aldolase family. DeoC type 1 subfamily.

The protein resides in the cytoplasm. The catalysed reaction is 2-deoxy-D-ribose 5-phosphate = D-glyceraldehyde 3-phosphate + acetaldehyde. It participates in carbohydrate degradation; 2-deoxy-D-ribose 1-phosphate degradation; D-glyceraldehyde 3-phosphate and acetaldehyde from 2-deoxy-alpha-D-ribose 1-phosphate: step 2/2. Functionally, catalyzes a reversible aldol reaction between acetaldehyde and D-glyceraldehyde 3-phosphate to generate 2-deoxy-D-ribose 5-phosphate. The sequence is that of Deoxyribose-phosphate aldolase from Nocardia farcinica (strain IFM 10152).